Consider the following 160-residue polypeptide: pH-gated potassium channel KcsA (160 aa).

Residues 1–27 (MPPMLSGLLARLVKLLLGRHGSALHWR) lie on the Cytoplasmic side of the membrane. Residues 28 to 50 (AAGAATVLLVIVLLAGSYLAVLA) traverse the membrane as a helical segment. Residues 51–61 (ERGAPGAQLIT) lie on the Extracellular side of the membrane. The segment at residues 62–72 (YPRALWWSVET) is an intramembrane region (helical; Pore-forming). Residues 73-80 (ATTVGYGD) constitute an intramembrane region (pore-forming). The short motif at 75 to 80 (TVGYGD) is the Selectivity filter element. Residues 81–87 (LYPVTLW) are Extracellular-facing. Residues 88-111 (GRLVAVVVMVAGITSFGLVTAALA) form a helical membrane-spanning segment. Over 112–160 (TWFVGREQERRGHFVRHSEKAAEEAYTRTTRALHERFDRLERMLDDNRR) the chain is Cytoplasmic.

This sequence belongs to the potassium channel family. Homotetramer.

It localises to the cell membrane. Acts as a pH-gated potassium ion channel; changing the cytosolic pH from 7 to 4 opens the channel. This Streptomyces coelicolor (strain ATCC BAA-471 / A3(2) / M145) protein is pH-gated potassium channel KcsA (kcsA).